A 594-amino-acid polypeptide reads, in one-letter code: MALEDRCSPQSAPSPPHHHHSSQSPTSTTTVTMATASPVPACTTTTTTTSTSGASAASSPTRDEMSLVVPISPLHIKQEPLGSDGPMPAQPPHHHQHPHHHQLPHHPHHQHHPQQQPSPQTSPPASISFSITNILSDRFGKATAEQQQQPHPQPPAIREPISPGPIHPAVLLPYPQHVLHPAHHPALLHPAYHTGLHHYYQPSPSHPQPIVPQPQRASLERRDSLFRPYDISKSPRLCSSNGSSSATPLPLHPYHTDSDCSTQDSTSAPSPATYGDIASPSSASSAMTTPVTTSSPTGSVYDYSRKASALDHRAALLNGFSAAASYPKLHEEIINPPQVPGEADRIANEGGTGCGGHGCCGGSATPHNMPPLGSLCKTVSQIGQHVAGTGSLNGSGSAANGASNGGSGAPATAKPTPKPIPKPAPSSETNGSSSQDAGMESSDDAKSETSSTKDGSENGSNLWPAWVYCTRYSDRPSSGPRYRRTKQPKEKGDSEEKRPRTAFSNAQLQRLKNEFNENRYLTEKRRQTLSAELGLNEAQIKIWFQNKRAKIKKSSSEKNPLALQLMAQGLYNHSTVPLTKEEEELEMRMNGQIP.

Disordered stretches follow at residues 1–64 (MALE…TRDE), 76–127 (IKQE…PASI), 141–164 (KATAEQQQQPHPQPPAIREPISPG), 198–217 (HYYQPSPSHPQPIVPQPQRA), 231–299 (ISKS…PTGS), 387–458 (AGTG…GSEN), and 474–501 (DRPSSGPRYRRTKQPKEKGDSEEKRPRT). Residues 22-60 (SQSPTSTTTVTMATASPVPACTTTTTTTSTSGASAASSP) are compositionally biased toward low complexity. Positions 92–112 (PHHHQHPHHHQLPHHPHHQHH) are enriched in basic residues. A compositionally biased stretch (pro residues) spans 151–164 (HPQPPAIREPISPG). Over residues 237-247 (LCSSNGSSSAT) the composition is skewed to polar residues. Composition is skewed to low complexity over residues 278–299 (ASPSSASSAMTTPVTTSSPTGS) and 387–402 (AGTGSLNGSGSAANGA). Polar residues-rich tracts occupy residues 426–436 (SSETNGSSSQD) and 448–458 (ETSSTKDGSEN). Basic and acidic residues predominate over residues 487–499 (QPKEKGDSEEKRP). The homeobox DNA-binding region spans 496–555 (EKRPRTAFSNAQLQRLKNEFNENRYLTEKRRQTLSAELGLNEAQIKIWFQNKRAKIKKSS).

The protein belongs to the engrailed homeobox family.

It localises to the nucleus. This protein specifies the body segmentation pattern. It is required for the development of the central nervous system. Transcriptional regulator that repress activated promoters. This Anopheles gambiae (African malaria mosquito) protein is Segmentation polarity homeobox protein engrailed (en).